The following is a 279-amino-acid chain: Very long chain fatty acid elongase 1 (279 aa).

Methionine 1 bears the N-acetylmethionine mark. 7 helical membrane passes run 23–43 (PLMGSPLLITSILLTYVYFIL), 61–81 (FMIVYNFSLVILSLYIVYEFL), 110–130 (VAWLFMLSKVIELMDTVIFIL), 137–154 (VTFLHVFHHSVLPWSWWW), 176–196 (VVMYLYYGLSALGPVAQPYLW), 203–223 (AIQLIQFVLVSLHISQYYFMP), and 231–251 (IIIHLIWMYGTIFFILFSNFW). A Di-lysine motif motif is present at residues 275–279 (KVKAN).

It belongs to the ELO family. ELOVL1 subfamily. As to quaternary structure, interacts with LASS2, TECR and HSD17B12. Interacts with TECR. As to expression, expressed in a broad variety of tissues. Highly expressed in stomach, lung, kidney, skin and intestine. Moderately expressed in white adipose tissue, liver, spleen, brain, brown adipose tissue, heart and muscle. Weakly expressed in testis.

It is found in the endoplasmic reticulum membrane. It carries out the reaction a very-long-chain acyl-CoA + malonyl-CoA + H(+) = a very-long-chain 3-oxoacyl-CoA + CO2 + CoA. It catalyses the reaction eicosanoyl-CoA + malonyl-CoA + H(+) = 3-oxodocosanoyl-CoA + CO2 + CoA. The catalysed reaction is docosanoyl-CoA + malonyl-CoA + H(+) = 3-oxotetracosanoyl-CoA + CO2 + CoA. The enzyme catalyses tetracosanoyl-CoA + malonyl-CoA + H(+) = 3-oxohexacosanoyl-CoA + CO2 + CoA. It carries out the reaction (11Z)-eicosenoyl-CoA + malonyl-CoA + H(+) = 3-oxo-(13Z)-docosenoyl-CoA + CO2 + CoA. It catalyses the reaction (13Z)-docosenoyl-CoA + malonyl-CoA + H(+) = 3-oxo-(15Z)-tetracosenoyl-CoA + CO2 + CoA. The protein operates within lipid metabolism; fatty acid biosynthesis. Its function is as follows. Catalyzes the first and rate-limiting reaction of the four reactions that constitute the long-chain fatty acids elongation cycle. This endoplasmic reticulum-bound enzymatic process allows the addition of 2 carbons to the chain of long- and very long-chain fatty acids (VLCFAs) per cycle. Condensing enzyme that exhibits activity toward saturated and monounsaturated acyl-CoA substrates, with the highest activity towards C22:0 acyl-CoA. May participate in the production of both saturated and monounsaturated VLCFAs of different chain lengths that are involved in multiple biological processes as precursors of membrane lipids and lipid mediators. Important for saturated C24:0 and monounsaturated C24:1 sphingolipid synthesis. Indirectly inhibits RPE65 via production of VLCFAs. The protein is Very long chain fatty acid elongase 1 of Mus musculus (Mouse).